The chain runs to 2035 residues: Proline-rich protein 12 (2035 aa).

4 disordered regions span residues 210-280 (GGGV…ERAL), 292-311 (RPASAQPPPPPPPAHSLQHY), 329-584 (CSPL…GAPG), and 645-685 (QAPS…GTPY). Residues 223-240 (QTPPYRPGPPDPPPPPRH) are compositionally biased toward pro residues. The span at 249-261 (ASSSAATAAEPSS) shows a compositional bias: low complexity. Over residues 296–305 (AQPPPPPPPA) the composition is skewed to pro residues. 2 positions are modified to phosphoserine: S330 and S338. Residues 338–364 (SPGAGEPSKGGPSGATAGAAGRATGPE) are compositionally biased toward low complexity. Residues 365-377 (TAGGGAAGGGGGY) are compositionally biased toward gly residues. Low complexity-rich tracts occupy residues 408–429 (STATPKCQSLGGPAAAYAAGKA) and 437–455 (SQAYSPGQPQGLLGPQAYG). The span at 476–487 (PPQPPSGPPPPG) shows a compositional bias: pro residues. Composition is skewed to polar residues over residues 490 to 501 (TCQSYSPDQLQG) and 520 to 534 (GLPTASPSLSYSTGH). The span at 540–555 (GHGGGWGPSSLGGGGE) shows a compositional bias: gly residues. The residue at position 648 (S648) is a Phosphoserine. Positions 670-681 (GLGGSGGAGGAP) are enriched in gly residues. T735 is modified (phosphothreonine). Disordered regions lie at residues 755–844 (AFLQ…PLQL), 851–870 (HGLEPTAPSPRLRPEESLEP), 879–920 (GALE…APRF), and 946–1061 (EMFG…CSTK). Positions 830–841 (PQPPPPPPPPMP) are enriched in pro residues. S859 carries the post-translational modification Phosphoserine. Positions 1031–1046 (SAPPPPPPPPPPPPVS) are enriched in pro residues. Phosphoserine occurs at positions 1070 and 1128. 4 disordered regions span residues 1112–1244 (RRLP…DHNS), 1288–1355 (PLYQ…SPCK), 1367–1567 (TLPS…GEGI), and 1662–1839 (HRPP…PGRL). Residues 1190-1199 (KPRGRGRGRG) show a composition bias toward basic residues. Positions 1200-1214 (RKAEEMGGTRLEPLK) are enriched in basic and acidic residues. At K1214 the chain carries N6-acetyllysine. T1295 is modified (phosphothreonine). S1299 is subject to Phosphoserine. The segment covering 1314 to 1329 (QPPPPTVPTVPHPAPS) has biased composition (pro residues). Phosphoserine is present on residues S1372, S1373, and S1378. Residues 1449 to 1529 (PPTPPPAPTP…PPEEPPAPSP (81 aa)) are compositionally biased toward pro residues. Over residues 1535–1547 (PDARPLHLAKKQE) the composition is skewed to basic and acidic residues. T1555 bears the Phosphothreonine mark. Position 1562 is a phosphoserine (S1562). Over residues 1698–1709 (ETPEKMTSEKPP) the composition is skewed to basic and acidic residues. T1699 carries the post-translational modification Phosphothreonine. Residues 1710-1730 (EPAPEPAVPEPPAPEKPSPPR) are compositionally biased toward pro residues. A compositionally biased stretch (basic and acidic residues) spans 1731-1768 (PVEKEKEKEKEKEKEKERVTRPLRSERATSGRQMRTDR). Residues 1769–1779 (SLATGQSTTSR) are compositionally biased toward polar residues. A compositionally biased stretch (low complexity) spans 1817-1828 (SSSDSESSPGAP). S1924 is subject to Phosphoserine.

As to expression, expressed in brain.

It localises to the nucleus. It is found in the postsynaptic density. The protein localises to the synapse. The protein resides in the synaptosome. The polypeptide is Proline-rich protein 12 (Mus musculus (Mouse)).